Consider the following 381-residue polypeptide: Layilin (381 aa).

Residues 1 to 24 form the signal peptide; sequence MQPGAALQAMLLAVLLAKPRDSKG. Over 25-235 the chain is Extracellular; it reads RLLSASDLDP…ERREAALNLA (211 aa). Residues 45–185 form the C-type lectin domain; the sequence is TRRPCYKVIY…CNMKNNFICK (141 aa). 2 disulfide bridges follow: Cys71–Cys184 and Cys150–Cys176. Asn117 is a glycosylation site (N-linked (GlcNAc...) asparagine). The helical transmembrane segment at 236–256 threads the bilayer; the sequence is YILIPSIPLFLLLVVTSAVCW. The Cytoplasmic portion of the chain corresponds to 257 to 381; the sequence is VWICRRKREQ…SGWVENEIYY (125 aa). Phosphoserine occurs at positions 286 and 299. The interaction with NF2 stretch occupies residues 330 to 374; it reads DYENIAVNPSESGFVTLASMESGFVTNDIYEFSPDRMGRSKESGW. Residues 337-381 are interaction with TLN1; the sequence is NPSESGFVTLASMESGFVTNDIYEFSPDRMGRSKESGWVENEIYY. Repeat copies occupy residues 340 to 344, 350 to 354, 356 to 359, 371 to 375, and 377 to 380. The segment at 340–375 is 3 X 5 AA repeats of E-S-G-X-V; sequence ESGFVTLASMESGFVTNDIYEFSPDRMGRSKESGWV. Residues 356-380 are 2 X 4 AA repeats of N-X-I-Y; it reads NDIYEFSPDRMGRSKESGWVENEIY.

As to quaternary structure, interacts with TLN1. Interacts with NF2 and RDX.

The protein localises to the membrane. Functionally, receptor for hyaluronate. The polypeptide is Layilin (Layn) (Mus musculus (Mouse)).